Here is an 802-residue protein sequence, read N- to C-terminus: Leucine--tRNA ligase (802 aa).

A 'HIGH' region motif is present at residues 40–51; that stretch reads PYPSGAGLHVGH. Residues 576-580 carry the 'KMSKS' region motif; that stretch reads KMSKS. K579 contributes to the ATP binding site.

It belongs to the class-I aminoacyl-tRNA synthetase family.

It is found in the cytoplasm. The catalysed reaction is tRNA(Leu) + L-leucine + ATP = L-leucyl-tRNA(Leu) + AMP + diphosphate. This Bacillus cereus (strain ATCC 14579 / DSM 31 / CCUG 7414 / JCM 2152 / NBRC 15305 / NCIMB 9373 / NCTC 2599 / NRRL B-3711) protein is Leucine--tRNA ligase.